A 382-amino-acid polypeptide reads, in one-letter code: Prophage ps2 probable integrase (382 aa).

The Core-binding (CB) domain occupies 63-142 (AKFTDIAEEW…TLNLIFDYAV (80 aa)). The Tyr recombinase domain maps to 170-376 (IQNKYLEQNE…TENMKSSIID (207 aa)). Catalysis depends on residues Arg-209, Lys-242, His-326, Arg-329, and His-352. Catalysis depends on Tyr-363, which acts as the O-(3'-phospho-DNA)-tyrosine intermediate.

Belongs to the 'phage' integrase family.

The protein is Prophage ps2 probable integrase (ps201) of Lactococcus lactis subsp. lactis (strain IL1403) (Streptococcus lactis).